The primary structure comprises 468 residues: Probable serine/threonine-protein phosphatase 2A activator 2 (468 aa).

The span at 412–424 shows a compositional bias: low complexity; that stretch reads STTTNNNNNNITS. Positions 412–468 are disordered; it reads STTTNNNNNNITSGDHCNDNEQQCSETHNHDHNHNHNHNHNHPPPPPQQQRSYFPLD.

It belongs to the PTPA-type PPIase family.

It localises to the cytoplasm. The catalysed reaction is [protein]-peptidylproline (omega=180) = [protein]-peptidylproline (omega=0). In terms of biological role, PPIases accelerate the folding of proteins. It catalyzes the cis-trans isomerization of proline imidic peptide bonds in oligopeptides. Acts as a regulatory subunit for PP2A-like phosphatases modulating their activity or substrate specificity, probably by inducing a conformational change in the catalytic subunit, a direct target of the PPIase. In Dictyostelium discoideum (Social amoeba), this protein is Probable serine/threonine-protein phosphatase 2A activator 2 (ppp2r4B).